The sequence spans 522 residues: Lysine--tRNA ligase (522 aa).

The 'HIGH' region signature appears at 44 to 52 (PSGLPHIGT). The 'KMSKS' region signature appears at 290–294 (KISKS). Position 293 (K293) interacts with ATP.

The protein belongs to the class-I aminoacyl-tRNA synthetase family.

The protein localises to the cytoplasm. It carries out the reaction tRNA(Lys) + L-lysine + ATP = L-lysyl-tRNA(Lys) + AMP + diphosphate. In Rickettsia bellii (strain OSU 85-389), this protein is Lysine--tRNA ligase.